The following is a 710-amino-acid chain: MEFKFSAVVDPSTYQTQGLCDGLTVRYHKNTELEEIDCLRCQEHWREQVGPLGLYRGGLGHPWSGMSIAIPEALPERLGIVSYANELAFLHDDVTDIAKYYQGDEHNNDLKAAFDQVISTGTIKHAGSGKRALQAYVAKRMLSIDNDRAITSLKAWSTFLEKAGRQEDYRFKSEDDYLKYRVHDVGMLFWYGLLTFAQAITIPENELDTCHQLATTAYLHMALVNDLVSWDKERQSAAALGKDYVTNFIFVAMEEHAISEDQAQERCRREIQKATVDYLRVFEEVKARDDLSPDTKRYLESVLYSMSGNVVWSFHSPRYYTDASFSERQLEWMKNGIPKAQTSEGGASGVDQGEVKIHDRTINGHHAVTSNGTGTGSHDTLNGDGTAHENNSRDASIPGRTTNGISNSDTSLLSAVLQAPYEYITALPSKGFREHAIDALNVWFRVPAEKLAIIKSIITILHNASLMLDDLEDGSELRRGKASTHMIFGLGQTINSANYQLVRALQEIQKLGGPKSLLVFTEELHYLYVGQSMDLYWTSNLICPSINEYFRMVEHKTGGLVRLFGRLMALHSTNPVKVDMIDFSNRLGRYFQTRDDYQNLVSAEYTKQKGYCEDLEEGKFSLPLIHLLQTMPENHVLRNVWMQRRVRGTATHAQKETILELMKRNGSLQFTEDTLGILYGHLEKSIGELERRFGAENFQLRLIFELLRNG.

A stellata-2,6,19-trien synthase region spans residues 1-327 (MEFKFSAVVD…RYYTDASFSE (327 aa)). Mg(2+) is bound by residues Asp92 and Asp96. Substrate contacts are provided by residues Asp92, Asp96, 181 to 184 (RVHD), and 229 to 233 (SWDKE). Positions 92 to 96 (DDVTD) match the DDXXD motif 1 motif. The short motif at 278–286 (YLRVFEEVK) is the NSE motif element. Residue 318 to 319 (RY) coordinates substrate. A geranylgeranyl diphosphate synthase region spans residues 328–709 (RQLEWMKNGI…LRLIFELLRN (382 aa)). The interval 365 to 404 (HHAVTSNGTGTGSHDTLNGDGTAHENNSRDASIPGRTTNG) is disordered. The span at 368–380 (VTSNGTGTGSHDT) shows a compositional bias: polar residues. Isopentenyl diphosphate is bound by residues Lys430, Arg433, and His462. Positions 469 and 473 each coordinate Mg(2+). Residues 469 to 473 (DDLED) carry the DDXXD motif 2 motif. Position 478 (Arg478) interacts with dimethylallyl diphosphate. Residue Arg479 participates in isopentenyl diphosphate binding. Dimethylallyl diphosphate contacts are provided by Lys556, Thr557, Gln592, Asn599, Lys609, and Lys619.

It in the C-terminal section; belongs to the FPP/GGPP synthase family. This sequence in the N-terminal section; belongs to the terpene synthase family. As to quaternary structure, hexamer.

It catalyses the reaction 4 isopentenyl diphosphate + dimethylallyl diphosphate = (2E,6E,10E,14E)-geranylfarnesyl diphosphate + 4 diphosphate. The enzyme catalyses (2E,6E,10E,14E)-geranylfarnesyl diphosphate = variecoladiene + diphosphate. Its pathway is secondary metabolite biosynthesis; terpenoid biosynthesis. In terms of biological role, multifunctional sesterterpene synthase; part of the gene cluster that mediates the biosynthesis of the sesterterpene variecolin. The first step in the pathway is performed by the variecoladiene synthase vrcA that possesses both prenyl transferase and terpene cyclase activity, converting isopentenyl diphosphate and dimethylallyl diphosphate into geranylfarnesyl pyrophosphate (GFPP) and then converting GFPP into the tetracyclic variecoladiene. The cytochrome P450 monooxygenase vrcB then catalyzes multiple oxidations at C-5 and C-20 positions to yield variecolin. The sequence is that of Bifunctional sesterterpene synthase from Aspergillus aculeatus (strain ATCC 16872 / CBS 172.66 / WB 5094).